A 286-amino-acid chain; its full sequence is Phosphatidylserine decarboxylase proenzyme (286 aa).

Catalysis depends on charge relay system; for autoendoproteolytic cleavage activity residues D89, H146, and S252. The Schiff-base intermediate with substrate; via pyruvic acid; for decarboxylase activity role is filled by S252. Position 252 is a pyruvic acid (Ser); by autocatalysis (S252).

This sequence belongs to the phosphatidylserine decarboxylase family. PSD-B subfamily. Prokaryotic type I sub-subfamily. Heterodimer of a large membrane-associated beta subunit and a small pyruvoyl-containing alpha subunit. Pyruvate is required as a cofactor. Post-translationally, is synthesized initially as an inactive proenzyme. Formation of the active enzyme involves a self-maturation process in which the active site pyruvoyl group is generated from an internal serine residue via an autocatalytic post-translational modification. Two non-identical subunits are generated from the proenzyme in this reaction, and the pyruvate is formed at the N-terminus of the alpha chain, which is derived from the carboxyl end of the proenzyme. The autoendoproteolytic cleavage occurs by a canonical serine protease mechanism, in which the side chain hydroxyl group of the serine supplies its oxygen atom to form the C-terminus of the beta chain, while the remainder of the serine residue undergoes an oxidative deamination to produce ammonia and the pyruvoyl prosthetic group on the alpha chain. During this reaction, the Ser that is part of the protease active site of the proenzyme becomes the pyruvoyl prosthetic group, which constitutes an essential element of the active site of the mature decarboxylase.

It is found in the cell membrane. The enzyme catalyses a 1,2-diacyl-sn-glycero-3-phospho-L-serine + H(+) = a 1,2-diacyl-sn-glycero-3-phosphoethanolamine + CO2. It functions in the pathway phospholipid metabolism; phosphatidylethanolamine biosynthesis; phosphatidylethanolamine from CDP-diacylglycerol: step 2/2. In terms of biological role, catalyzes the formation of phosphatidylethanolamine (PtdEtn) from phosphatidylserine (PtdSer). The chain is Phosphatidylserine decarboxylase proenzyme from Shewanella loihica (strain ATCC BAA-1088 / PV-4).